We begin with the raw amino-acid sequence, 799 residues long: 1,4-alpha-glucan-branching enzyme 2, chloroplastic/amyloplastic (799 aa).

The N-terminal 57 residues, 1 to 57 (MAFRVSGAVLGGAVRAPRLTGGGEGSLVFRHTGLFLTRGARVGCSGTHGAMRAAAAA), are a transit peptide targeting the chloroplast. 2 residues coordinate (1,4-alpha-D-glucosyl)n: Trp-196 and Lys-232. Asp-447 functions as the Nucleophile in the catalytic mechanism. Residue Glu-502 is the Proton donor of the active site.

It belongs to the glycosyl hydrolase 13 family. GlgB subfamily. As to quaternary structure, monomer.

The protein localises to the plastid. It localises to the chloroplast. Its subcellular location is the amyloplast. The enzyme catalyses Transfers a segment of a (1-&gt;4)-alpha-D-glucan chain to a primary hydroxy group in a similar glucan chain.. The protein operates within glycan biosynthesis; starch biosynthesis. Its function is as follows. Catalyzes the formation of the alpha-1,6-glucosidic linkages in starch by scission of a 1,4-alpha-linked oligosaccharide from growing alpha-1,4-glucan chains and the subsequent attachment of the oligosaccharide to the alpha-1,6 position. This chain is 1,4-alpha-glucan-branching enzyme 2, chloroplastic/amyloplastic (SBE1), found in Zea mays (Maize).